The following is a 746-amino-acid chain: NAD(P)H-quinone oxidoreductase subunit 5, chloroplastic (746 aa).

16 helical membrane-spanning segments follow: residues 9-29 (YIIL…LLFV), 40-60 (WAFV…NLAI), 88-108 (LIDP…IMVL), 125-145 (FAYM…SNLI), 147-167 (IHIF…FWFT), 185-205 (GDFG…SLEF), 225-245 (FAIL…AQFP), 258-278 (TPIS…FLVA), 283-303 (LFIV…ITLL), 327-347 (LGYI…FHLI), 354-374 (ALLF…VGYS), 396-416 (TTFL…CFWS), 425-445 (WLYS…TAFY), 554-574 (LFPL…GIPF), 610-630 (IFSV…YGSV), and 726-746 (YLFL…YFDF).

Belongs to the complex I subunit 5 family. NDH is composed of at least 16 different subunits, 5 of which are encoded in the nucleus.

Its subcellular location is the plastid. It is found in the chloroplast thylakoid membrane. It catalyses the reaction a plastoquinone + NADH + (n+1) H(+)(in) = a plastoquinol + NAD(+) + n H(+)(out). It carries out the reaction a plastoquinone + NADPH + (n+1) H(+)(in) = a plastoquinol + NADP(+) + n H(+)(out). NDH shuttles electrons from NAD(P)H:plastoquinone, via FMN and iron-sulfur (Fe-S) centers, to quinones in the photosynthetic chain and possibly in a chloroplast respiratory chain. The immediate electron acceptor for the enzyme in this species is believed to be plastoquinone. Couples the redox reaction to proton translocation, and thus conserves the redox energy in a proton gradient. This Dioscorea elephantipes (Elephant's foot yam) protein is NAD(P)H-quinone oxidoreductase subunit 5, chloroplastic (ndhF).